The following is a 153-amino-acid chain: Ribosome maturation factor RimP (153 aa).

This sequence belongs to the RimP family.

The protein resides in the cytoplasm. Functionally, required for maturation of 30S ribosomal subunits. The chain is Ribosome maturation factor RimP from Actinobacillus pleuropneumoniae serotype 5b (strain L20).